The primary structure comprises 255 residues: Acetylglutamate kinase (255 aa).

Substrate-binding positions include 40–41 (GG), Arg62, and Asn153.

This sequence belongs to the acetylglutamate kinase family. ArgB subfamily.

The protein localises to the cytoplasm. The enzyme catalyses N-acetyl-L-glutamate + ATP = N-acetyl-L-glutamyl 5-phosphate + ADP. The protein operates within amino-acid biosynthesis; L-arginine biosynthesis; N(2)-acetyl-L-ornithine from L-glutamate: step 2/4. Functionally, catalyzes the ATP-dependent phosphorylation of N-acetyl-L-glutamate. This chain is Acetylglutamate kinase, found in Bacillus thuringiensis subsp. konkukian (strain 97-27).